The chain runs to 62 residues: Chromatin protein Cren7 1 (62 aa).

It belongs to the Cren7 family. In terms of assembly, monomer. Methylated at multiple sites, to varying extents.

The protein localises to the chromosome. It localises to the cytoplasm. Its function is as follows. A chromatin protein, binds double-stranded DNA without sequence specificity. Constrains negative DNA supercoils. This chain is Chromatin protein Cren7 1 (cren7-1), found in Hyperthermus butylicus (strain DSM 5456 / JCM 9403 / PLM1-5).